We begin with the raw amino-acid sequence, 199 residues long: NAD(P)H dehydrogenase (quinone) (199 aa).

The Flavodoxin-like domain occupies 4–190; sequence ILVLYYSSWG…EGARFQGKRL (187 aa). FMN-binding positions include 10 to 15 and 78 to 80; these read SSWGHM and TRY. Trp-12 serves as a coordination point for NAD(+). Trp-98 is a binding site for substrate. FMN is bound by residues 113-119 and His-134; that span reads STATQHG. The disordered stretch occupies residues 155–175; the sequence is VRGGAPYGMTTTSDTDGSRMP.

The protein belongs to the WrbA family. FMN serves as cofactor.

The catalysed reaction is a quinone + NADH + H(+) = a quinol + NAD(+). It catalyses the reaction a quinone + NADPH + H(+) = a quinol + NADP(+). This is NAD(P)H dehydrogenase (quinone) from Chelativorans sp. (strain BNC1).